We begin with the raw amino-acid sequence, 306 residues long: Ribosomal RNA small subunit methyltransferase H (306 aa).

S-adenosyl-L-methionine is bound by residues glycine 33–tyrosine 35, aspartate 51, phenylalanine 78, aspartate 96, and glutamine 103.

The protein belongs to the methyltransferase superfamily. RsmH family.

Its subcellular location is the cytoplasm. It carries out the reaction cytidine(1402) in 16S rRNA + S-adenosyl-L-methionine = N(4)-methylcytidine(1402) in 16S rRNA + S-adenosyl-L-homocysteine + H(+). Specifically methylates the N4 position of cytidine in position 1402 (C1402) of 16S rRNA. The chain is Ribosomal RNA small subunit methyltransferase H from Rickettsia felis (strain ATCC VR-1525 / URRWXCal2) (Rickettsia azadi).